A 250-amino-acid polypeptide reads, in one-letter code: Bacteriorhodopsin (250 aa).

At 1–18 the chain is on the extracellular side; sequence MCCAALAPPMAATVGPES. A helical transmembrane segment spans residues 19-37; that stretch reads IWLWIGTIGMTLGTLYFVG. At 38–51 the chain is on the cytoplasmic side; that stretch reads RGRGVRDRKMQEFY. Residues 52–70 form a helical membrane-spanning segment; that stretch reads IITIFITTIAAAMYFAMAT. The Extracellular segment spans residues 71–86; that stretch reads GFGVTEVMVGDEALTI. The helical transmembrane segment at 87-104 threads the bilayer; it reads YWARYADWLFTTPLLLLD. Topologically, residues 105-115 are cytoplasmic; it reads LSLLAGANRNT. A helical transmembrane segment spans residues 116–135; sequence IATLIGLDVFMIGTGAIAAL. Over 136–142 the chain is Extracellular; sequence SSTPGTR. A helical transmembrane segment spans residues 143 to 162; the sequence is IAWWAISTGALLALLYVLVG. The Cytoplasmic segment spans residues 163–180; that stretch reads TLSENARNRAPEVASLFG. A helical membrane pass occupies residues 181-199; sequence RLRNLVIALWFLYPVVWIL. The Extracellular segment spans residues 200–212; the sequence is GTEGTFGILPLYW. A helical membrane pass occupies residues 213–232; it reads ETAAFMVLDLSAKVGFGVIL. Lys-225 is modified (N6-(retinylidene)lysine). Residues 233 to 250 lie on the Cytoplasmic side of the membrane; that stretch reads LQSRSVLERVATPTAAPT.

The protein belongs to the archaeal/bacterial/fungal opsin family.

It is found in the cell membrane. Light-driven proton pump. The protein is Bacteriorhodopsin (bop) of Haloterrigena sp. (strain arg-4).